The following is a 204-amino-acid chain: Large ribosomal subunit protein uL3c (204 aa).

The disordered stretch occupies residues 126-155 (HNFTRGPMTHGSKNHREPGSIGQGSTPAKV).

Belongs to the universal ribosomal protein uL3 family. In terms of assembly, part of the 50S ribosomal subunit.

The protein localises to the plastid. It localises to the chloroplast. In terms of biological role, one of the primary rRNA binding proteins, it binds directly near the 3'-end of the 23S rRNA, where it nucleates assembly of the 50S subunit. The polypeptide is Large ribosomal subunit protein uL3c (rpl3) (Guillardia theta (Cryptophyte)).